The sequence spans 244 residues: Carbonyl reductase [NADPH] 2 (244 aa).

Position 11-39 (11-39 (LVTGAGKGIGRDTVKALHASGAKVVAVTR)) interacts with NADP(+). Phosphoserine is present on Ser-42. Position 136 (Ser-136) interacts with substrate. Tyr-149 functions as the Proton acceptor in the catalytic mechanism. Position 176 is a phosphoserine (Ser-176).

This sequence belongs to the short-chain dehydrogenases/reductases (SDR) family. As to quaternary structure, homotetramer. In terms of tissue distribution, predominantly expressed in lung, in ciliated cells, non-ciliated bronchiolar cells and type-II alveolar pneumocytes. Also detected in adipose tissue (at protein level). Low expression in testis, heart, kidney, spleen, brain and liver.

It localises to the mitochondrion matrix. It carries out the reaction a secondary alcohol + NADP(+) = a ketone + NADPH + H(+). In terms of biological role, may function in the pulmonary metabolism of endogenous carbonyl compounds, such as aliphatic aldehydes and ketones derived from lipid peroxidation, 3-ketosteroids and fatty aldehydes, as well as in xenobiotic metabolism. This Mus musculus (Mouse) protein is Carbonyl reductase [NADPH] 2 (Cbr2).